The sequence spans 481 residues: Glutamyl-tRNA(Gln) amidotransferase subunit A (481 aa).

Residues Lys76 and Ser151 each act as charge relay system in the active site. The Acyl-ester intermediate role is filled by Ser175.

This sequence belongs to the amidase family. GatA subfamily. As to quaternary structure, heterotrimer of A, B and C subunits.

The enzyme catalyses L-glutamyl-tRNA(Gln) + L-glutamine + ATP + H2O = L-glutaminyl-tRNA(Gln) + L-glutamate + ADP + phosphate + H(+). Allows the formation of correctly charged Gln-tRNA(Gln) through the transamidation of misacylated Glu-tRNA(Gln) in organisms which lack glutaminyl-tRNA synthetase. The reaction takes place in the presence of glutamine and ATP through an activated gamma-phospho-Glu-tRNA(Gln). The sequence is that of Glutamyl-tRNA(Gln) amidotransferase subunit A from Neisseria gonorrhoeae (strain NCCP11945).